The sequence spans 435 residues: Bystin (435 aa).

Residues Met1–Glu102 are disordered. At Arg40 the chain carries Omega-N-methylarginine. Positions Ala71 to Thr87 are enriched in basic and acidic residues. Ser98 is modified (phosphoserine). At Thr154 the chain carries Phosphothreonine. Ser165 and Ser412 each carry phosphoserine.

It belongs to the bystin family. In terms of assembly, binds trophinin, tastin and cytokeratins.

Its subcellular location is the cytoplasm. The protein resides in the nucleus. The protein localises to the nucleolus. Functionally, required for processing of 20S pre-rRNA precursor and biogenesis of 40S ribosomal subunits. In Bos taurus (Bovine), this protein is Bystin (BYSL).